The sequence spans 313 residues: Methylenetetrahydrofolate dehydrogenase [NAD(+)] (313 aa).

Residue cysteine 152 is part of the active site. Residues 187 to 188, 210 to 211, and 270 to 272 each bind NAD(+); these read RS, DI, and FAG.

Belongs to the tetrahydrofolate dehydrogenase/cyclohydrolase family. As to quaternary structure, homodimer.

It catalyses the reaction (6R)-5,10-methylene-5,6,7,8-tetrahydrofolate + NAD(+) = (6R)-5,10-methenyltetrahydrofolate + NADH. The protein operates within one-carbon metabolism; tetrahydrofolate interconversion. In terms of biological role, catalyzes oxidation of cytoplasmic one-carbon units for purine biosynthesis. This Dictyostelium discoideum (Social amoeba) protein is Methylenetetrahydrofolate dehydrogenase [NAD(+)] (thfA).